We begin with the raw amino-acid sequence, 198 residues long: Glycerol-3-phosphate acyltransferase (198 aa).

5 helical membrane passes run 2-22 (YAVLTAIIAYLIGCINNAYIL), 48-70 (LGYKAAAPVFALDVLKGVIAVLI), 75-97 (MGNTGAMIAGIAVVCGHNWPVFL), 111-131 (VVMTVSPLLGLIALAIGVTVI), and 154-174 (IFWNSTQIFIFSLILASLAIF).

The protein belongs to the PlsY family. As to quaternary structure, probably interacts with PlsX.

Its subcellular location is the cell membrane. The enzyme catalyses an acyl phosphate + sn-glycerol 3-phosphate = a 1-acyl-sn-glycero-3-phosphate + phosphate. Its pathway is lipid metabolism; phospholipid metabolism. Catalyzes the transfer of an acyl group from acyl-phosphate (acyl-PO(4)) to glycerol-3-phosphate (G3P) to form lysophosphatidic acid (LPA). This enzyme utilizes acyl-phosphate as fatty acyl donor, but not acyl-CoA or acyl-ACP. This chain is Glycerol-3-phosphate acyltransferase, found in Thermoanaerobacter pseudethanolicus (strain ATCC 33223 / 39E) (Clostridium thermohydrosulfuricum).